The sequence spans 64 residues: MGMRMMFTLFLLVVLTTTVVSFPSDSASDGRDDEAKDERSDMYKSKRNGRCCHPACGKHFSCGR.

The first 21 residues, 1–21, serve as a signal peptide directing secretion; sequence MGMRMMFTLFLLVVLTTTVVS. Residues 22–47 constitute a propeptide that is removed on maturation; that stretch reads FPSDSASDGRDDEAKDERSDMYKSKR. Residues 23–46 form a disordered region; it reads PSDSASDGRDDEAKDERSDMYKSK. The segment covering 28 to 44 has biased composition (basic and acidic residues); sequence SDGRDDEAKDERSDMYK. Disulfide bonds link C51–C56 and C52–C62. The residue at position 62 (C62) is a Cysteine amide.

Belongs to the conotoxin A superfamily. Expressed by the venom duct.

It is found in the secreted. Alpha-conotoxins act on postsynaptic membranes, they bind to the nicotinic acetylcholine receptors (nAChR) and thus inhibit them. This is Alpha-conotoxin-like Ac1.1b from Conus achatinus (Little frog cone).